A 179-amino-acid chain; its full sequence is MLDLGLSKMALIGVVALVVLGPERLPRVARTAGALFGRAQRYINDVKAEVSREIELDALRTMKTDFESAARNVETTIHDNLREHEKELNDTWHSAVGGLDGAAGDAGSVGSPGSDTPAAPSWRGSSAALAPKRRNWRIKQAATPVWYKRATTRRTHVQSGAARVARHQPASLRRPTRFF.

The helical transmembrane segment at 1-21 threads the bilayer; sequence MLDLGLSKMALIGVVALVVLG. A compositionally biased stretch (low complexity) spans 101–115; the sequence is GAAGDAGSVGSPGSD. Positions 101 to 134 are disordered; the sequence is GAAGDAGSVGSPGSDTPAAPSWRGSSAALAPKRR.

The protein belongs to the TatB family. As to quaternary structure, the Tat system comprises two distinct complexes: a TatABC complex, containing multiple copies of TatA, TatB and TatC subunits, and a separate TatA complex, containing only TatA subunits. Substrates initially bind to the TatABC complex, which probably triggers association of the separate TatA complex to form the active translocon.

The protein resides in the cell inner membrane. Part of the twin-arginine translocation (Tat) system that transports large folded proteins containing a characteristic twin-arginine motif in their signal peptide across membranes. Together with TatC, TatB is part of a receptor directly interacting with Tat signal peptides. TatB may form an oligomeric binding site that transiently accommodates folded Tat precursor proteins before their translocation. This is Sec-independent protein translocase protein TatB from Burkholderia orbicola (strain AU 1054).